We begin with the raw amino-acid sequence, 478 residues long: Pyruvate kinase (478 aa).

Arg-35 is a substrate binding site. K(+) is bound by residues Asn-37, Ser-39, and Asp-69. An ATP-binding site is contributed by 37–40 (NMSH). Positions 76 and 157 each coordinate ATP. Residue Glu-219 coordinates Mg(2+). The substrate site is built by Gly-242, Asp-243, and Thr-275. Asp-243 is a binding site for Mg(2+).

This sequence belongs to the pyruvate kinase family. As to quaternary structure, homotetramer. It depends on Mg(2+) as a cofactor. K(+) is required as a cofactor.

It catalyses the reaction pyruvate + ATP = phosphoenolpyruvate + ADP + H(+). Its pathway is carbohydrate degradation; glycolysis; pyruvate from D-glyceraldehyde 3-phosphate: step 5/5. This is Pyruvate kinase (pyk) from Methylorubrum extorquens (strain ATCC 14718 / DSM 1338 / JCM 2805 / NCIMB 9133 / AM1) (Methylobacterium extorquens).